Here is a 416-residue protein sequence, read N- to C-terminus: CinA-like protein (416 aa).

It belongs to the CinA family.

The chain is CinA-like protein from Solibacter usitatus (strain Ellin6076).